The sequence spans 1086 residues: WD repeat-containing protein 64 (1086 aa).

WD repeat units follow at residues 129 to 168, 170 to 199, 321 to 360, 364 to 403, 411 to 448, 453 to 492, 498 to 537, 560 to 602, and 642 to 683; these read RRRD…WITG, DYLG…SSQE, AMPR…KPVG, GHMF…VLQV, PGDM…QDTK, THER…QIYQ, GLSI…EMKM, QVKQ…PYLQ, and IVDV…VKEI. The interval 724–749 is disordered; sequence ICSSTQCDSSKGPQSSKGSKQSIHDA. Low complexity predominate over residues 732 to 744; it reads SSKGPQSSKGSKQ. WD repeat units follow at residues 765-806, 809-850, and 863-902; these read ASRK…KDML, TKHS…DPPH, and AHSL…YCGY. The tract at residues 1047-1069 is disordered; it reads DKVKREEAPEMTEGSRRKSLKRN. Positions 1049 to 1062 are enriched in basic and acidic residues; that stretch reads VKREEAPEMTEGSR.

The protein is WD repeat-containing protein 64 (Wdr64) of Mus musculus (Mouse).